A 274-amino-acid chain; its full sequence is Pantothenate synthetase (274 aa).

26–33 (MGNLHAGH) is a binding site for ATP. Residue histidine 33 is the Proton donor of the active site. Residue glutamine 57 coordinates (R)-pantoate. Glutamine 57 is a binding site for beta-alanine. Residue 143–146 (GKKD) participates in ATP binding. Glutamine 149 serves as a coordination point for (R)-pantoate. Residues valine 172 and 180 to 183 (LSSR) each bind ATP.

This sequence belongs to the pantothenate synthetase family. In terms of assembly, homodimer.

The protein resides in the cytoplasm. It catalyses the reaction (R)-pantoate + beta-alanine + ATP = (R)-pantothenate + AMP + diphosphate + H(+). Its pathway is cofactor biosynthesis; (R)-pantothenate biosynthesis; (R)-pantothenate from (R)-pantoate and beta-alanine: step 1/1. Its function is as follows. Catalyzes the condensation of pantoate with beta-alanine in an ATP-dependent reaction via a pantoyl-adenylate intermediate. The polypeptide is Pantothenate synthetase (Dechloromonas aromatica (strain RCB)).